The primary structure comprises 437 residues: Glutamate-1-semialdehyde 2,1-aminomutase (437 aa).

K274 bears the N6-(pyridoxal phosphate)lysine mark.

The protein belongs to the class-III pyridoxal-phosphate-dependent aminotransferase family. HemL subfamily. Homodimer. Requires pyridoxal 5'-phosphate as cofactor.

The protein resides in the cytoplasm. The enzyme catalyses (S)-4-amino-5-oxopentanoate = 5-aminolevulinate. It functions in the pathway porphyrin-containing compound metabolism; protoporphyrin-IX biosynthesis; 5-aminolevulinate from L-glutamyl-tRNA(Glu): step 2/2. The protein is Glutamate-1-semialdehyde 2,1-aminomutase of Verminephrobacter eiseniae (strain EF01-2).